Here is a 113-residue protein sequence, read N- to C-terminus: Death-associated protein-like 1.L (113 aa).

Residues 1-57 (MAKEQKMQSSPQALKAGHLPAVKAGGMRVSKKQGNEENSAPEKNAKKTLQEKPSSVL) are disordered.

It belongs to the DAP-DAPL1 family. As to quaternary structure, associates with ribosomes; preventing translation. Interacts with eiF5a (eif5a and eif5a2); preventing translation.

Ribosome-binding protein that promotes ribosome hibernation, a process during which ribosomes are stabilized in an inactive state and preserved from proteasomal degradation. Acts via its association with eiF5a (eif5a and eif5a2) at the polypeptide exit tunnel of the ribosome, preventing mRNA translation. Plays a key role in ribosome hibernation in the mature egg by preventing mRNA translation, leading to ribosome inactivation. Ribosomes, which are produced in large quantities during oogenesis, are stored and translationally repressed in the egg and early embryo. The protein is Death-associated protein-like 1.L (dapl1.L) of Xenopus laevis (African clawed frog).